The chain runs to 183 residues: Holliday junction branch migration complex subunit RuvA (183 aa).

The interval 1–63 (MIVGLIGVVE…EDAHLLYGFL (63 aa)) is domain I. The tract at residues 64 to 139 (EESEKILFER…FFIQDENRPA (76 aa)) is domain II. Ala-139 is a region of interest (flexible linker). The tract at residues 139-183 (ARNEVFLALESLGFKSAEINPVLKTLKPHLSIEAAIKEALQQLRS) is domain III.

The protein belongs to the RuvA family. As to quaternary structure, homotetramer. Forms an RuvA(8)-RuvB(12)-Holliday junction (HJ) complex. HJ DNA is sandwiched between 2 RuvA tetramers; dsDNA enters through RuvA and exits via RuvB. An RuvB hexamer assembles on each DNA strand where it exits the tetramer. Each RuvB hexamer is contacted by two RuvA subunits (via domain III) on 2 adjacent RuvB subunits; this complex drives branch migration. In the full resolvosome a probable DNA-RuvA(4)-RuvB(12)-RuvC(2) complex forms which resolves the HJ.

The protein resides in the cytoplasm. The RuvA-RuvB-RuvC complex processes Holliday junction (HJ) DNA during genetic recombination and DNA repair, while the RuvA-RuvB complex plays an important role in the rescue of blocked DNA replication forks via replication fork reversal (RFR). RuvA specifically binds to HJ cruciform DNA, conferring on it an open structure. The RuvB hexamer acts as an ATP-dependent pump, pulling dsDNA into and through the RuvAB complex. HJ branch migration allows RuvC to scan DNA until it finds its consensus sequence, where it cleaves and resolves the cruciform DNA. In Helicobacter pylori (strain J99 / ATCC 700824) (Campylobacter pylori J99), this protein is Holliday junction branch migration complex subunit RuvA.